The chain runs to 357 residues: Protein-L-isoaspartate O-methyltransferase domain-containing protein 1 (357 aa).

A lipid anchor (N-myristoyl glycine) is attached at Gly-2. Ser-64 is an active-site residue. AdoMet binding motif regions lie at residues 85-94 (LNLGSGTGYL), 160-164 (YDRIY), and 181-191 (LKVGGILVMPI). A BC-box region spans residues 240–250 (VRNLQDLARIY). The segment at 299–331 (PLDSEEDEKMEEDSKEEEEKEHIEAMKREEPPQ) is disordered. Acidic residues predominate over residues 301 to 317 (DSEEDEKMEEDSKEEEE). Residues 318 to 331 (KEHIEAMKREEPPQ) are compositionally biased toward basic and acidic residues. Residues 341-344 (LPLP) form a CUL-box region.

This sequence belongs to the methyltransferase superfamily. L-isoaspartyl/D-aspartyl protein methyltransferase family. As to quaternary structure, component of the probable ECS(PCMTD1) E3 ubiquitin-protein ligase complex, at least composed of CUL5, ELOB, ELOC, RBX2 and PCMTD1. Interacts (via the BC-box) with ELOB and ELOC; the interaction is direct and stabilizes PCMTD1.

Its subcellular location is the cytoplasm. The protein resides in the membrane. Its function is as follows. Substrate recognition component of an ECS (Elongin BC-CUL5-SOCS-box protein) E3 ubiquitin ligase complex which mediates the ubiquitination and subsequent proteasomal degradation of target proteins. Specifically binds to the methyltransferase cofactor S-adenosylmethionine (AdoMet) via the N-terminal AdoMet binding motif, but does not display methyltransferase activity. May provide an alternate maintenance pathway for modified proteins by acting as a damage-specific E3 ubiquitin ligase adaptor protein. The chain is Protein-L-isoaspartate O-methyltransferase domain-containing protein 1 (Pcmtd1) from Mus musculus (Mouse).